The following is a 243-amino-acid chain: Pyridoxine 5'-phosphate synthase (243 aa).

Asn9 contacts 3-amino-2-oxopropyl phosphate. Residue 11-12 coordinates 1-deoxy-D-xylulose 5-phosphate; that stretch reads DH. Residue Arg20 coordinates 3-amino-2-oxopropyl phosphate. Catalysis depends on His45, which acts as the Proton acceptor. Residues Arg47 and His52 each coordinate 1-deoxy-D-xylulose 5-phosphate. Glu72 functions as the Proton acceptor in the catalytic mechanism. Position 102 (Thr102) interacts with 1-deoxy-D-xylulose 5-phosphate. Residue His193 is the Proton donor of the active site. Residues Gly194 and 215-216 contribute to the 3-amino-2-oxopropyl phosphate site; that span reads GH.

Belongs to the PNP synthase family. In terms of assembly, homooctamer; tetramer of dimers.

It is found in the cytoplasm. It carries out the reaction 3-amino-2-oxopropyl phosphate + 1-deoxy-D-xylulose 5-phosphate = pyridoxine 5'-phosphate + phosphate + 2 H2O + H(+). Its pathway is cofactor biosynthesis; pyridoxine 5'-phosphate biosynthesis; pyridoxine 5'-phosphate from D-erythrose 4-phosphate: step 5/5. Functionally, catalyzes the complicated ring closure reaction between the two acyclic compounds 1-deoxy-D-xylulose-5-phosphate (DXP) and 3-amino-2-oxopropyl phosphate (1-amino-acetone-3-phosphate or AAP) to form pyridoxine 5'-phosphate (PNP) and inorganic phosphate. The protein is Pyridoxine 5'-phosphate synthase of Yersinia pseudotuberculosis serotype I (strain IP32953).